Consider the following 640-residue polypeptide: 1-deoxy-D-xylulose-5-phosphate synthase (640 aa).

Residues histidine 72 and 113–115 each bind thiamine diphosphate; that span reads GHA. Aspartate 144 provides a ligand contact to Mg(2+). Thiamine diphosphate is bound by residues 145–146, asparagine 174, tyrosine 287, and glutamate 370; that span reads GA. Residue asparagine 174 participates in Mg(2+) binding.

It belongs to the transketolase family. DXPS subfamily. Homodimer. The cofactor is Mg(2+). It depends on thiamine diphosphate as a cofactor.

It carries out the reaction D-glyceraldehyde 3-phosphate + pyruvate + H(+) = 1-deoxy-D-xylulose 5-phosphate + CO2. It participates in metabolic intermediate biosynthesis; 1-deoxy-D-xylulose 5-phosphate biosynthesis; 1-deoxy-D-xylulose 5-phosphate from D-glyceraldehyde 3-phosphate and pyruvate: step 1/1. Catalyzes the acyloin condensation reaction between C atoms 2 and 3 of pyruvate and glyceraldehyde 3-phosphate to yield 1-deoxy-D-xylulose-5-phosphate (DXP). In Synechococcus sp. (strain RCC307), this protein is 1-deoxy-D-xylulose-5-phosphate synthase.